We begin with the raw amino-acid sequence, 179 residues long: Diphosphoinositol polyphosphate phosphohydrolase 2 (179 aa).

Residues Arg9, 17-19 (KKR), and 38-40 (SSR) contribute to the substrate site. The Nudix hydrolase domain occupies 17–143 (KKRAACLCFR…VHAEYLEKLK (127 aa)). The Mg(2+) site is built by Gly49 and Glu65. The Nudix box signature appears at 50–71 (GGMEPEEEPGGAAVREVYEEAG). Glu68 functions as the Proton acceptor in the catalytic mechanism. Residue Glu69 participates in Mg(2+) binding. Substrate contacts are provided by residues 88–90 (RKH), Arg114, and Lys132.

This sequence belongs to the Nudix hydrolase family. DIPP subfamily. Mg(2+) is required as a cofactor. Mn(2+) serves as cofactor.

Its subcellular location is the cytoplasm. It catalyses the reaction diphospho-myo-inositol polyphosphate + H2O = myo-inositol polyphosphate + phosphate.. The catalysed reaction is 5-diphospho-1D-myo-inositol 1,2,3,4,6-pentakisphosphate + H2O = 1D-myo-inositol hexakisphosphate + phosphate + H(+). It carries out the reaction 3,5-bis(diphospho)-1D-myo-inositol 1,2,4,6-tetrakisphosphate + H2O = 3-diphospho-1D-myo-inositol 1,2,4,5,6-pentakisphosphate + phosphate + 2 H(+). The enzyme catalyses 5-diphospho-1D-myo-inositol 1,3,4,6-tetrakisphosphate + H2O = 1D-myo-inositol 1,3,4,5,6-pentakisphosphate + phosphate + H(+). It catalyses the reaction P(1),P(6)-bis(5'-adenosyl) hexaphosphate + H2O = 2 ATP + 2 H(+). The catalysed reaction is P(1),P(5)-bis(5'-adenosyl) pentaphosphate + H2O = ADP + ATP + 2 H(+). It carries out the reaction 5-phospho-alpha-D-ribose 1-diphosphate + H2O = alpha-D-ribose 1,5-bisphosphate + phosphate + H(+). Cleaves the beta-phosphate from diphosphoinositol polyphosphates such as PP-InsP5 (diphosphoinositol pentakisphosphate), PP-InsP4 (diphosphoinositol tetrakisphosphate) and [PP]2-InsP4 (bisdiphosphoinositol tetrakisphosphate), suggesting that it may play a role in signal transduction. Diadenosine polyphosphates, particularly Ap6A (P(1),P(6)-bis(5a-adenosyl) hexaphosphate) and Ap5A (P(1),P(5)-bis(5'-adenosyl) pentaphosphate) are downstream effectors of a signaling cascade that regulates cardiac KATP channels, can also be substrates, although with lower preference than the diphosphoinositol polyphosphates. Can also catalyze the hydrolysis of 5-phosphoribose 1-diphosphate, generating the glycolytic activator ribose 1,5-bisphosphate. Does not play a role in U8 snoRNA decapping activity. Binds U8 snoRNA. The chain is Diphosphoinositol polyphosphate phosphohydrolase 2 from Mus musculus (Mouse).